Reading from the N-terminus, the 338-residue chain is tRNA N6-adenosine threonylcarbamoyltransferase (338 aa).

Positions 111 and 115 each coordinate Fe cation. Substrate-binding positions include 134 to 138 (LVSGG), Asp167, Gly180, and Asn272. Asp300 lines the Fe cation pocket.

Belongs to the KAE1 / TsaD family. The cofactor is Fe(2+).

The protein resides in the cytoplasm. The enzyme catalyses L-threonylcarbamoyladenylate + adenosine(37) in tRNA = N(6)-L-threonylcarbamoyladenosine(37) in tRNA + AMP + H(+). In terms of biological role, required for the formation of a threonylcarbamoyl group on adenosine at position 37 (t(6)A37) in tRNAs that read codons beginning with adenine. Is involved in the transfer of the threonylcarbamoyl moiety of threonylcarbamoyl-AMP (TC-AMP) to the N6 group of A37, together with TsaE and TsaB. TsaD likely plays a direct catalytic role in this reaction. The protein is tRNA N6-adenosine threonylcarbamoyltransferase of Aliivibrio salmonicida (strain LFI1238) (Vibrio salmonicida (strain LFI1238)).